Consider the following 409-residue polypeptide: Phosphatidylserine decarboxylase proenzyme, mitochondrial (409 aa).

The transit peptide at 1-52 (MATSVGHRCLGLLHGVAPWRSSLHPCEITALSQSLQPLRKLPFRAFRTDARK) directs the protein to the mitochondrion. Topologically, residues 53-63 (IHTAPARTMFL) are mitochondrial matrix. The helical transmembrane segment at 64–82 (LRPVPILLATGGGYAGYRQ) threads the bilayer. At 83–409 (YEKYRERELE…IRFGEALGSL (327 aa)) the chain is on the mitochondrial intermembrane side. Catalysis depends on charge relay system; for autoendoproteolytic cleavage activity residues D191, H267, and S378. The Schiff-base intermediate with substrate; via pyruvic acid; for decarboxylase activity role is filled by S378. S378 carries the pyruvic acid (Ser); by autocatalysis modification.

This sequence belongs to the phosphatidylserine decarboxylase family. PSD-B subfamily. Eukaryotic type I sub-subfamily. In terms of assembly, heterodimer of a large membrane-associated beta subunit and a small pyruvoyl-containing alpha subunit. The cofactor is pyruvate. Post-translationally, is synthesized initially as an inactive proenzyme. Formation of the active enzyme involves a self-maturation process in which the active site pyruvoyl group is generated from an internal serine residue via an autocatalytic post-translational modification. Two non-identical subunits are generated from the proenzyme in this reaction, and the pyruvate is formed at the N-terminus of the alpha chain, which is derived from the carboxyl end of the proenzyme. The autoendoproteolytic cleavage occurs by a canonical serine protease mechanism, in which the side chain hydroxyl group of the serine supplies its oxygen atom to form the C-terminus of the beta chain, while the remainder of the serine residue undergoes an oxidative deamination to produce ammonia and the pyruvoyl prosthetic group on the alpha chain. During this reaction, the Ser that is part of the protease active site of the proenzyme becomes the pyruvoyl prosthetic group, which constitutes an essential element of the active site of the mature decarboxylase.

It is found in the mitochondrion inner membrane. The protein resides in the lipid droplet. Its subcellular location is the cytoplasm. The catalysed reaction is a 1,2-diacyl-sn-glycero-3-phospho-L-serine + H(+) = a 1,2-diacyl-sn-glycero-3-phosphoethanolamine + CO2. Its pathway is phospholipid metabolism; phosphatidylethanolamine biosynthesis. In terms of biological role, catalyzes the formation of phosphatidylethanolamine (PtdEtn) from phosphatidylserine (PtdSer). Plays a central role in phospholipid metabolism and in the interorganelle trafficking of phosphatidylserine. May be involved in lipid droplet biogenesis at the endoplasmic reticulum membrane. This is Phosphatidylserine decarboxylase proenzyme, mitochondrial from Pongo abelii (Sumatran orangutan).